Consider the following 150-residue polypeptide: Nitric oxide reductase subunit C (150 aa).

A helical; Signal-anchor membrane pass occupies residues 13-29 (VFYGGSIFFILIFGALT). 3 residues coordinate heme c: Cys-62, Cys-65, and His-66.

In terms of assembly, heterodimer of cytochromes b (large subunit) and c (small subunit).

The protein localises to the cell membrane. Its function is as follows. Component of the anaerobic respiratory chain that transforms nitrate to dinitrogen (denitrification). The protein is Nitric oxide reductase subunit C (norC) of Paracoccus denitrificans.